We begin with the raw amino-acid sequence, 568 residues long: PTS system lactose-specific EIICB component (568 aa).

The region spanning 7–409 is the PTS EIIC type-3 domain; that stretch reads LIEKGKPFFE…VVDTIIYYPF (403 aa). The next 9 helical transmembrane spans lie at 30–50, 62–82, 103–123, 128–148, 183–203, 222–242, 283–303, 339–359, and 389–409; these read GFIA…IAYV, IETF…FFVG, INFL…AAEP, GFLT…AAFV, FTVS…TLGV, GYLG…VGIH, FIAT…FMWI, IFFV…KFFV, and VLSF…YYPF. The region spanning 466–568 is the PTS EIIB type-3 domain; the sequence is ETNVLVLCAG…ALAFVQQQFD (103 aa). Catalysis depends on C473, which acts as the Phosphocysteine intermediate; for EIIB activity. C473 carries the post-translational modification Phosphocysteine; by EIIA.

The protein localises to the cell membrane. It catalyses the reaction lactose(out) + N(pros)-phospho-L-histidyl-[protein] = lactose 6-phosphate(in) + L-histidyl-[protein]. Its function is as follows. The phosphoenolpyruvate-dependent sugar phosphotransferase system (sugar PTS), a major carbohydrate active transport system, catalyzes the phosphorylation of incoming sugar substrates concomitantly with their translocation across the cell membrane. The enzyme II LacEF PTS system is involved in lactose transport. This chain is PTS system lactose-specific EIICB component, found in Lactococcus lactis subsp. lactis (Streptococcus lactis).